A 432-amino-acid chain; its full sequence is Acyl-coenzyme A thioesterase 3 (432 aa).

Active-site charge relay system residues include S243, D337, and H371. Residues 430-432 (AKL) carry the Microbody targeting signal motif.

It belongs to the C/M/P thioester hydrolase family. Widely expressed. Highly expressed in the kidney, expressed at low level in the liver. Isoform 2 is expressed in the kidney, but not in the liver. Isoform 1 is liver-specific. Highly expressed in kidney (at protein level).

The protein localises to the peroxisome. The enzyme catalyses hexadecanoyl-CoA + H2O = hexadecanoate + CoA + H(+). The catalysed reaction is decanoyl-CoA + H2O = decanoate + CoA + H(+). It catalyses the reaction dodecanoyl-CoA + H2O = dodecanoate + CoA + H(+). It carries out the reaction tetradecanoyl-CoA + H2O = tetradecanoate + CoA + H(+). The enzyme catalyses octadecanoyl-CoA + H2O = octadecanoate + CoA + H(+). The catalysed reaction is eicosanoyl-CoA + H2O = eicosanoate + CoA + H(+). It catalyses the reaction (9Z)-octadecenoyl-CoA + H2O = (9Z)-octadecenoate + CoA + H(+). It carries out the reaction (9Z,12Z)-octadecadienoyl-CoA + H2O = (9Z,12Z)-octadecadienoate + CoA + H(+). The enzyme catalyses (5Z,8Z,11Z,14Z)-eicosatetraenoyl-CoA + H2O = (5Z,8Z,11Z,14Z)-eicosatetraenoate + CoA + H(+). The catalysed reaction is tetracosanoyl-CoA + H2O = tetracosanoate + CoA + H(+). It catalyses the reaction hexacosanoyl-CoA + H2O = hexacosanoate + CoA + H(+). It carries out the reaction docosanoyl-CoA + H2O = docosanoate + CoA + H(+). The enzyme catalyses (9Z)-hexadecenoyl-CoA + H2O = (9Z)-hexadecenoate + CoA + H(+). It participates in lipid metabolism; fatty acid metabolism. Its function is as follows. Catalyzes the hydrolysis of acyl-CoAs into free fatty acids and coenzyme A (CoASH), regulating their respective intracellular levels. Mainly active on long-chain acyl-CoAs. May have a function in termination of beta-oxidation of fatty acids. In Mus musculus (Mouse), this protein is Acyl-coenzyme A thioesterase 3 (Acot3).